Consider the following 40-residue polypeptide: Photosystem I reaction center subunit IX (40 aa).

A helical membrane pass occupies residues Phe4–Val24.

Belongs to the PsaJ family.

It is found in the cellular thylakoid membrane. May help in the organization of the PsaE and PsaF subunits. The sequence is that of Photosystem I reaction center subunit IX from Prochlorococcus marinus (strain MIT 9313).